The following is a 1401-amino-acid chain: Condensin complex subunit 1 (1401 aa).

The interval 1–603 (MAPQMYEFHL…TVCKNKPNMS (603 aa)) is interactions with SMC2 and SMC4. Residues S20 and S585 each carry the phosphoserine modification. Polar residues predominate over residues 576 to 596 (STQEKNPRESTGNMVTGQTVC). Disordered stretches follow at residues 576–611 (STQE…SRGN), 956–978 (REEQ…TTME), and 1303–1401 (LEIG…RHRS). Residues 956–971 (REEQEHKTKDPKEKNT) show a composition bias toward basic and acidic residues. Polar residues predominate over residues 1308 to 1336 (AGSQRAPSAKKPSTGSRYQPLASTASDND). 3 positions are modified to phosphoserine: S1310, S1315, and S1330. T1331 bears the Phosphothreonine mark. S1333 is subject to Phosphoserine. T1339 carries the post-translational modification Phosphothreonine. A Bipartite nuclear localization signal motif is present at residues 1342 to 1362 (PRRTTRRHPNTQQRASKKKPK). The span at 1345–1362 (TTRRHPNTQQRASKKKPK) shows a compositional bias: basic residues. 5 positions are modified to phosphoserine: S1366, S1367, S1370, S1371, and S1376. The span at 1369-1382 (ESSEEDLSAEMTED) shows a compositional bias: acidic residues. 2 positions are modified to phosphothreonine; by CDK1: T1384 and T1389. Position 1395 is a phosphoserine (S1395).

The protein belongs to the CND1 (condensin subunit 1) family. Component of the condensin complex, which contains the SMC2 and SMC4 heterodimer, and three non SMC subunits that probably regulate the complex: NCAPH/BRRN1, NCAPD2/CAPD2 and NCAPG. Interacts with histones H1 and H3. Phosphorylated by CDK1. Its phosphorylation, as well as that of NCAPH and NCAPG subunits, activates the condensin complex and is required for chromosome condensation.

The protein localises to the nucleus. It localises to the cytoplasm. Its subcellular location is the chromosome. In terms of biological role, regulatory subunit of the condensin complex, a complex required for conversion of interphase chromatin into mitotic-like condense chromosomes. The condensin complex probably introduces positive supercoils into relaxed DNA in the presence of type I topoisomerases and converts nicked DNA into positive knotted forms in the presence of type II topoisomerases. May target the condensin complex to DNA via its C-terminal domain. May promote the resolution of double-strand DNA catenanes (intertwines) between sister chromatids. Condensin-mediated compaction likely increases tension in catenated sister chromatids, providing directionality for type II topoisomerase-mediated strand exchanges toward chromatid decatenation. Required for decatenation of non-centromeric ultrafine DNA bridges during anaphase. Early in neurogenesis, may play an essential role to ensure accurate mitotic chromosome condensation in neuron stem cells, ultimately affecting neuron pool and cortex size. The protein is Condensin complex subunit 1 of Homo sapiens (Human).